The sequence spans 147 residues: Hemoglobin subunit beta (147 aa).

N-acetylvaline is present on Val-2. Residues 3–147 (HLSAEEKEAV…VANALAHKYH (145 aa)) enclose the Globin domain. Ser-45 is modified (phosphoserine). Position 60 is an N6-acetyllysine (Lys-60). A heme b-binding site is contributed by His-64. Lys-83 bears the N6-acetyllysine mark. Position 93 (His-93) interacts with heme b. Cys-94 is subject to S-nitrosocysteine. Lys-145 carries the N6-acetyllysine modification.

This sequence belongs to the globin family. Heterotetramer of two alpha chains and two beta chains. As to expression, red blood cells.

Involved in oxygen transport from the lung to the various peripheral tissues. This is Hemoglobin subunit beta (HBB) from Sus scrofa (Pig).